The sequence spans 509 residues: ATP synthase subunit alpha 1 (509 aa).

172-179 provides a ligand contact to ATP; sequence GDRQTGKT.

It belongs to the ATPase alpha/beta chains family. As to quaternary structure, F-type ATPases have 2 components, CF(1) - the catalytic core - and CF(0) - the membrane proton channel. CF(1) has five subunits: alpha(3), beta(3), gamma(1), delta(1), epsilon(1). CF(0) has four main subunits: a(1), b(1), b'(1) and c(9-12).

Its subcellular location is the cell inner membrane. It catalyses the reaction ATP + H2O + 4 H(+)(in) = ADP + phosphate + 5 H(+)(out). Functionally, produces ATP from ADP in the presence of a proton gradient across the membrane. The alpha chain is a regulatory subunit. This chain is ATP synthase subunit alpha 1, found in Dinoroseobacter shibae (strain DSM 16493 / NCIMB 14021 / DFL 12).